A 426-amino-acid polypeptide reads, in one-letter code: Glutamyl-tRNA(Gln) amidotransferase subunit D (426 aa).

An Asparaginase/glutaminase domain is found at 82–413; sequence KNISILSTGG…KDAKKLICKN (332 aa). Active-site residues include T92, T168, D169, and K245.

Belongs to the asparaginase 1 family. GatD subfamily. As to quaternary structure, heterodimer of GatD and GatE.

It carries out the reaction L-glutamyl-tRNA(Gln) + L-glutamine + ATP + H2O = L-glutaminyl-tRNA(Gln) + L-glutamate + ADP + phosphate + H(+). Functionally, allows the formation of correctly charged Gln-tRNA(Gln) through the transamidation of misacylated Glu-tRNA(Gln) in organisms which lack glutaminyl-tRNA synthetase. The reaction takes place in the presence of glutamine and ATP through an activated gamma-phospho-Glu-tRNA(Gln). The GatDE system is specific for glutamate and does not act on aspartate. In Methanococcus vannielii (strain ATCC 35089 / DSM 1224 / JCM 13029 / OCM 148 / SB), this protein is Glutamyl-tRNA(Gln) amidotransferase subunit D.